Consider the following 816-residue polypeptide: Fibroblast growth factor receptor (816 aa).

Positions 1 to 19 (MISDWCVVLVLLMSRLVFG) are cleaved as a signal peptide. The Extracellular portion of the chain corresponds to 20-370 (LNFTEPVNYI…YKEESVEKTV (351 aa)). Residues asparagine 21, asparagine 69, asparagine 119, asparagine 156, asparagine 171, asparagine 244, asparagine 274, asparagine 313, and asparagine 321 are each glycosylated (N-linked (GlcNAc...) asparagine). The Ig-like C2-type 1 domain occupies 25 to 105 (PVNYILKLGE…VTAMNEESVQ (81 aa)). An intrachain disulfide couples cysteine 43 to cysteine 94. The 92-residue stretch at 126 to 217 (LRIKNDISLL…GKIEHIMTVE (92 aa)) folds into the Ig-like C2-type 2 domain. Cysteine 147 and cysteine 201 are disulfide-bonded. Residues 371 to 391 (IFIVITSMLAGLIFVAFVIFF) form a helical membrane-spanning segment. Residues 392-816 (ICRVRSKDKF…DILLSHYAVS (425 aa)) lie on the Cytoplasmic side of the membrane. The Protein kinase domain maps to 474–747 (LETDCLLGEG…QLIEDLERML (274 aa)). ATP-binding positions include 480–488 (LGEGAFGRV) and lysine 508. Residue aspartate 612 is the Proton acceptor of the active site. The residue at position 643 (tyrosine 643) is a Phosphotyrosine; by autocatalysis.

The protein belongs to the protein kinase superfamily. Tyr protein kinase family. Fibroblast growth factor receptor subfamily.

It localises to the membrane. It catalyses the reaction L-tyrosyl-[protein] + ATP = O-phospho-L-tyrosyl-[protein] + ADP + H(+). Its function is as follows. Receptor for basic fibroblast growth factor. This chain is Fibroblast growth factor receptor (FGFR), found in Hydra vulgaris (Hydra).